We begin with the raw amino-acid sequence, 670 residues long: tRNA 5-methylaminomethyl-2-thiouridine biosynthesis bifunctional protein MnmC (670 aa).

Positions 1 to 242 are tRNA (mnm(5)s(2)U34)-methyltransferase; the sequence is MTFSVQHAEI…KRECLSGLKI (242 aa). Residues 269–670 form an FAD-dependent cmnm(5)s(2)U34 oxidoreductase region; that stretch reads IGGGIASLCA…KKWLKGSKVE (402 aa).

It in the N-terminal section; belongs to the methyltransferase superfamily. tRNA (mnm(5)s(2)U34)-methyltransferase family. The protein in the C-terminal section; belongs to the DAO family. FAD serves as cofactor.

It is found in the cytoplasm. It carries out the reaction 5-aminomethyl-2-thiouridine(34) in tRNA + S-adenosyl-L-methionine = 5-methylaminomethyl-2-thiouridine(34) in tRNA + S-adenosyl-L-homocysteine + H(+). Catalyzes the last two steps in the biosynthesis of 5-methylaminomethyl-2-thiouridine (mnm(5)s(2)U) at the wobble position (U34) in tRNA. Catalyzes the FAD-dependent demodification of cmnm(5)s(2)U34 to nm(5)s(2)U34, followed by the transfer of a methyl group from S-adenosyl-L-methionine to nm(5)s(2)U34, to form mnm(5)s(2)U34. The sequence is that of tRNA 5-methylaminomethyl-2-thiouridine biosynthesis bifunctional protein MnmC from Haemophilus influenzae (strain PittGG).